The following is an 875-amino-acid chain: MAAAPSHPAGLPCSPGPGSPPPPGGSDLQSLPPLLPQIPAPGSGVSFHIQIGLTREFVLLPAASELAHVKQLACSIVDQKFPECGFYGLYDKILLFKHDPTSANLLQLVRSAADIQEGDLVEVVLSASATFEDFQIRPHALTVHSYRAPAFCDHCGEMLFGLVRQGLKCDGCGLNYHKRCAFSIPNNCSGARKRRLSSTSLASGHSVRLGSSESLPCTAEELSRSTTDLLPRRPPSSSSSSSSSSFYTGRPIELDKMLMSKVKVPHTFLIHSYTRPTVCQACKKLLKGLFRQGLQCKDCKFNCHKRCATRVPNDCLGEALINGDVPMEEAADYSEADKSSLSDELEDSGVIPGSHAENALHASEEEEGEGGKAQSSLGYIPLMRVVQSVRHTTRKSSTTLREGWVVHYSNKDTLRKRHYWRLDCKCITLFQNNTTNRYYKEIPLSEILAVEPAQNFSLVPPGTNPHCFEIITANVTYFVGETPGGAPGGPSGQGTEAARGWETAIRQALMPVILQDAPSAPGHTPHRQASLSISVSNSQIQENVDIATVYQIFPDEVLGSGQFGVVYGGKHRKTGRDVAVKVIDKLRFPTKQESQLRNEVAILQSLRHPGIVNLECMFETPEKVFVVMEKLHGDMLEMILSSEKGRLPERLTKFLITQILVALRHLHFKNIVHCDLKPENVLLASADPFPQVKLCDFGFARIIGEKSFRRSVVGTPAYLAPEVLLNQGYNRSLDMWSVGVIMYVSLSGTFPFNEDEDINDQIQNAAFMYPASPWSHISSGAIDLINNLLQVKMRKRYSVDKSLSHPWLQEYQTWLDLRELEGKMGERYITHESDDARWDQFVSERHGTPAEGDLGGACLPQDHEMQGLAERISIL.

The segment at 1-33 (MAAAPSHPAGLPCSPGPGSPPPPGGSDLQSLPP) is disordered. Over residues 14–24 (SPGPGSPPPPG) the composition is skewed to pro residues. Phosphoserine is present on residues Ser-26 and Ser-30. Tyr-87 is modified (phosphotyrosine). A Phorbol-ester/DAG-type 1 zinc finger spans residues 138–188 (PHALTVHSYRAPAFCDHCGEMLFGLVRQGLKCDGCGLNYHKRCAFSIPNNC). A phosphoserine mark is found at Ser-197, Ser-198, Ser-200, Ser-203, Ser-206, Ser-211, Ser-212, and Ser-214. Residues 224 to 247 (RSTTDLLPRRPPSSSSSSSSSSFY) form a disordered region. The span at 236–245 (SSSSSSSSSS) shows a compositional bias: low complexity. Ser-244 is subject to Phosphoserine; by CSNK1D and CSNK1E. Position 245 is a phosphoserine (Ser-245). Residues 265-315 (PHTFLIHSYTRPTVCQACKKLLKGLFRQGLQCKDCKFNCHKRCATRVPNDC) form a Phorbol-ester/DAG-type 2 zinc finger. Positions 398 to 510 (TTLREGWVVH…WETAIRQALM (113 aa)) constitute a PH domain. Tyr-408 is subject to Phosphotyrosine. Residue Tyr-439 is modified to Phosphotyrosine; by ABL1. Ser-519 is subject to Phosphoserine. Positions 552-808 (IFPDEVLGSG…VDKSLSHPWL (257 aa)) constitute a Protein kinase domain. Residues 558–566 (LGSGQFGVV) and Lys-581 contribute to the ATP site. The active-site Proton acceptor is Asp-675. The residue at position 707 (Ser-707) is a Phosphoserine; by PKC. Phosphoserine is present on Ser-711. Residue Tyr-718 is modified to Phosphotyrosine; by ABL1. The Important for ABL1-mediated Tyr-718 phosphorylation signature appears at 725 to 727 (LNQ). A Phosphoserine; by autocatalysis modification is found at Ser-873.

It belongs to the protein kinase superfamily. CAMK Ser/Thr protein kinase family. PKD subfamily. In terms of assembly, interacts (via C-terminus) with LCK. Interacts (via N-terminus and zing-finger domain 1 and 2) with PRKCD in response to oxidative stress; the interaction is independent of PRKD2 tyrosine phosphorylation. It depends on Mg(2+) as a cofactor. In terms of processing, phosphorylation of Ser-873 correlates with the activation status of the kinase. Ser-707 is probably phosphorylated by PKC. Phosphorylation at Ser-244 by CSNK1D and CSNK1E promotes nuclear localization and substrate targeting. Phosphorylation at Ser-244, Ser-707 and Ser-711 is required for nuclear localization. Phosphorylated at Tyr-438 by ABL1 in response to oxidative stress. Phosphorylated at Tyr-718 by ABL1 specifically in response to oxidative stress; requires prior phosphorylation at Ser-707 or/and Ser-711.

The protein resides in the cytoplasm. Its subcellular location is the cell membrane. It localises to the golgi apparatus. It is found in the trans-Golgi network. It catalyses the reaction L-seryl-[protein] + ATP = O-phospho-L-seryl-[protein] + ADP + H(+). The enzyme catalyses L-threonyl-[protein] + ATP = O-phospho-L-threonyl-[protein] + ADP + H(+). Activated by DAG and phorbol esters. Phorbol-ester/DAG-type domains bind DAG, mediating translocation to membranes. Autophosphorylation of Ser-711 and phosphorylation of Ser-707 by PKC relieves auto-inhibition by the PH domain. Catalytic activity is further increased by phosphorylation at Tyr-718 in response to oxidative stress. Its function is as follows. Serine/threonine-protein kinase that converts transient diacylglycerol (DAG) signals into prolonged physiological effects downstream of PKC, and is involved in the regulation of cell proliferation via MAPK1/3 (ERK1/2) signaling, oxidative stress-induced NF-kappa-B activation, inhibition of HDAC7 transcriptional repression, signaling downstream of T-cell antigen receptor (TCR) and cytokine production, and plays a role in Golgi membrane trafficking, angiogenesis, secretory granule release and cell adhesion. May potentiate mitogenesis induced by the neuropeptide bombesin by mediating an increase in the duration of MAPK1/3 (ERK1/2) signaling, which leads to accumulation of immediate-early gene products including FOS that stimulate cell cycle progression. In response to oxidative stress, is phosphorylated at Tyr-438 and Tyr-718 by ABL1, which leads to the activation of PRKD2 without increasing its catalytic activity, and mediates activation of NF-kappa-B. In response to the activation of the gastrin receptor CCKBR, is phosphorylated at Ser-244 by CSNK1D and CSNK1E, translocates to the nucleus, phosphorylates HDAC7, leading to nuclear export of HDAC7 and inhibition of HDAC7 transcriptional repression of NR4A1/NUR77. Upon TCR stimulation, is activated independently of ZAP70, translocates from the cytoplasm to the nucleus and is required for interleukin-2 (IL2) promoter up-regulation. During adaptive immune responses, is required in peripheral T-lymphocytes for the production of the effector cytokines IL2 and IFNG after TCR engagement and for optimal induction of antibody responses to antigens. In epithelial cells stimulated with lysophosphatidic acid (LPA), is activated through a PKC-dependent pathway and mediates LPA-stimulated interleukin-8 (IL8) secretion via a NF-kappa-B-dependent pathway. During TCR-induced T-cell activation, interacts with and is activated by the tyrosine kinase LCK, which results in the activation of the NFAT transcription factors. In the trans-Golgi network (TGN), regulates the fission of transport vesicles that are on their way to the plasma membrane and in polarized cells is involved in the transport of proteins from the TGN to the basolateral membrane. Plays an important role in endothelial cell proliferation and migration prior to angiogenesis, partly through modulation of the expression of KDR/VEGFR2 and FGFR1, two key growth factor receptors involved in angiogenesis. In secretory pathway, is required for the release of chromogranin-A (CHGA)-containing secretory granules from the TGN. Downstream of PRKCA, plays important roles in angiotensin-2-induced monocyte adhesion to endothelial cells. The chain is Serine/threonine-protein kinase D2 (Prkd2) from Rattus norvegicus (Rat).